An 85-amino-acid polypeptide reads, in one-letter code: F1845 adhesin operon regulatory protein (85 aa).

Its function is as follows. Regulates the transcription of genes involved in the biosynthesis of F1845 fimbrial adhesin. This Escherichia coli protein is F1845 adhesin operon regulatory protein (daaA).